The primary structure comprises 232 residues: Ribonuclease 3 (232 aa).

An RNase III domain is found at 5-134; sequence ENLLFDRFGL…FLGALLLDKG (130 aa). Glu47 provides a ligand contact to Mg(2+). Asp51 is an active-site residue. Mg(2+) contacts are provided by Asp120 and Glu123. Residue Glu123 is part of the active site. In terms of domain architecture, DRBM spans 160-229; that stretch reads DYKTKLQELL…AKNAFEKENH (70 aa).

This sequence belongs to the ribonuclease III family. Homodimer. Mg(2+) is required as a cofactor.

It localises to the cytoplasm. The enzyme catalyses Endonucleolytic cleavage to 5'-phosphomonoester.. Functionally, digests double-stranded RNA. Involved in the processing of primary rRNA transcript to yield the immediate precursors to the large and small rRNAs (23S and 16S). Processes some mRNAs, and tRNAs when they are encoded in the rRNA operon. Processes pre-crRNA and tracrRNA of type II CRISPR loci if present in the organism. The chain is Ribonuclease 3 from Streptococcus gordonii (strain Challis / ATCC 35105 / BCRC 15272 / CH1 / DL1 / V288).